Here is a 404-residue protein sequence, read N- to C-terminus: Cysteine desulfurase IscS (404 aa).

Pyridoxal 5'-phosphate contacts are provided by residues 75-76, N155, Q183, and 203-205; these read AT and SAH. At K206 the chain carries N6-(pyridoxal phosphate)lysine. A pyridoxal 5'-phosphate-binding site is contributed by T243. The Cysteine persulfide intermediate role is filled by C328. C328 is a [2Fe-2S] cluster binding site.

It belongs to the class-V pyridoxal-phosphate-dependent aminotransferase family. NifS/IscS subfamily. As to quaternary structure, homodimer. Forms a heterotetramer with IscU, interacts with other sulfur acceptors. Requires pyridoxal 5'-phosphate as cofactor.

The protein localises to the cytoplasm. The enzyme catalyses (sulfur carrier)-H + L-cysteine = (sulfur carrier)-SH + L-alanine. The protein operates within cofactor biosynthesis; iron-sulfur cluster biosynthesis. In terms of biological role, master enzyme that delivers sulfur to a number of partners involved in Fe-S cluster assembly, tRNA modification or cofactor biosynthesis. Catalyzes the removal of elemental sulfur atoms from cysteine to produce alanine. Functions as a sulfur delivery protein for Fe-S cluster synthesis onto IscU, an Fe-S scaffold assembly protein, as well as other S acceptor proteins. In Vibrio vulnificus (strain YJ016), this protein is Cysteine desulfurase IscS.